The chain runs to 252 residues: 5-oxoprolinase subunit A (252 aa).

Belongs to the LamB/PxpA family. In terms of assembly, forms a complex composed of PxpA, PxpB and PxpC.

The enzyme catalyses 5-oxo-L-proline + ATP + 2 H2O = L-glutamate + ADP + phosphate + H(+). Its function is as follows. Catalyzes the cleavage of 5-oxoproline to form L-glutamate coupled to the hydrolysis of ATP to ADP and inorganic phosphate. This chain is 5-oxoprolinase subunit A, found in Corynebacterium glutamicum (strain ATCC 13032 / DSM 20300 / JCM 1318 / BCRC 11384 / CCUG 27702 / LMG 3730 / NBRC 12168 / NCIMB 10025 / NRRL B-2784 / 534).